Here is a 208-residue protein sequence, read N- to C-terminus: Calaxin (208 aa).

EF-hand domains follow at residues 64 to 99 (TDDMIMDRVFRGFDKDNDSFISVTEWVEGLSVFLHG), 100 to 135 (TLEEKIKYCFGVYDLNGDGYISREEMFHMLKNSLLK), and 145 to 180 (GVKDLVEIALKKMDYDHDSKLSYTDFEKAVQEENLL). Positions 77, 79, 81, 113, 115, 117, 119, 124, 158, 160, 162, 164, and 169 each coordinate Ca(2+).

Component of the outer dynein arm-docking complex along with ODAD1, ODAD2, ODAD3 and ODAD4.

Its subcellular location is the cytoplasm. The protein resides in the cytoskeleton. The protein localises to the cilium axoneme. It localises to the cell projection. It is found in the cilium. Its subcellular location is the flagellum. In terms of biological role, component of the outer dynein arm-docking complex (ODA-DC) that mediates outer dynein arms (ODA) binding onto the doublet microtubule. Seems to regulate the assembly of both ODAs and their axonemal docking complex onto ciliary microtubules. Regulates ciliary and flagellar motility and is required for cilia-driven determination of body laterality. In Xenopus laevis (African clawed frog), this protein is Calaxin (clxn).